The chain runs to 440 residues: Histidinol dehydrogenase (440 aa).

Y139, Q200, and N223 together coordinate NAD(+). Substrate-binding residues include S246, Q268, and H271. Q268 and H271 together coordinate Zn(2+). Residues E336 and H337 each act as proton acceptor in the active site. Substrate-binding residues include H337, D370, E424, and H429. D370 contacts Zn(2+). H429 lines the Zn(2+) pocket.

This sequence belongs to the histidinol dehydrogenase family. The cofactor is Zn(2+).

It carries out the reaction L-histidinol + 2 NAD(+) + H2O = L-histidine + 2 NADH + 3 H(+). It functions in the pathway amino-acid biosynthesis; L-histidine biosynthesis; L-histidine from 5-phospho-alpha-D-ribose 1-diphosphate: step 9/9. Functionally, catalyzes the sequential NAD-dependent oxidations of L-histidinol to L-histidinaldehyde and then to L-histidine. The chain is Histidinol dehydrogenase from Bordetella bronchiseptica (strain ATCC BAA-588 / NCTC 13252 / RB50) (Alcaligenes bronchisepticus).